A 349-amino-acid polypeptide reads, in one-letter code: Ion-translocating oxidoreductase complex subunit D (349 aa).

A run of 3 helical transmembrane segments spans residues 36–56 (CAFFGWGTLIQVLLAIIVALS), 77–99 (SAMLTAILIGVAIPPLAPWWMIV), and 124–144 (AMAAYVLLLVSFPVQMTSWIA). Residue threonine 185 is modified to FMN phosphoryl threonine. 5 helical membrane-spanning segments follow: residues 212 to 232 (GTGVGWFWVNLAYLAGGLVLL), 239 to 259 (WHISTGVLAGLFVASSIGFLL), 265 to 285 (ASPLFHLFSGATMLAAFFIAT), 291 to 311 (ATSPRGRLIFGALIGVLVYII), and 315 to 335 (GGYPDAFAFAVLLANLCAPFI).

It belongs to the NqrB/RnfD family. In terms of assembly, the complex is composed of six subunits: RnfA, RnfB, RnfC, RnfD, RnfE and RnfG. FMN serves as cofactor.

Its subcellular location is the cell inner membrane. Part of a membrane-bound complex that couples electron transfer with translocation of ions across the membrane. The polypeptide is Ion-translocating oxidoreductase complex subunit D (Shewanella sp. (strain ANA-3)).